The sequence spans 171 residues: Shikimate kinase (171 aa).

14–19 provides a ligand contact to ATP; that stretch reads GAGKST. S18 is a Mg(2+) binding site. Substrate is bound by residues D36, R60, and G82. R120 contacts ATP. R139 lines the substrate pocket. Q156 contacts ATP.

This sequence belongs to the shikimate kinase family. As to quaternary structure, monomer. Mg(2+) serves as cofactor.

The protein resides in the cytoplasm. The enzyme catalyses shikimate + ATP = 3-phosphoshikimate + ADP + H(+). It participates in metabolic intermediate biosynthesis; chorismate biosynthesis; chorismate from D-erythrose 4-phosphate and phosphoenolpyruvate: step 5/7. In terms of biological role, catalyzes the specific phosphorylation of the 3-hydroxyl group of shikimic acid using ATP as a cosubstrate. The protein is Shikimate kinase of Shewanella baltica (strain OS195).